A 105-amino-acid chain; its full sequence is Nucleoid-associated protein OCAR_7544/OCA5_c05960 (105 aa).

The protein belongs to the YbaB/EbfC family. As to quaternary structure, homodimer.

Its subcellular location is the cytoplasm. It is found in the nucleoid. Binds to DNA and alters its conformation. May be involved in regulation of gene expression, nucleoid organization and DNA protection. This Afipia carboxidovorans (strain ATCC 49405 / DSM 1227 / KCTC 32145 / OM5) (Oligotropha carboxidovorans) protein is Nucleoid-associated protein OCAR_7544/OCA5_c05960.